Consider the following 48-residue polypeptide: Large ribosomal subunit protein eL40 (48 aa).

It belongs to the eukaryotic ribosomal protein eL40 family.

This chain is Large ribosomal subunit protein eL40, found in Methanoculleus marisnigri (strain ATCC 35101 / DSM 1498 / JR1).